The chain runs to 926 residues: Sperm-associated antigen 1 (926 aa).

3 TPR repeats span residues 209–242 (ATRE…LPTV), 244–275 (AYNN…EPGN), and 276–309 (VKAL…EPDN). The disordered stretch occupies residues 318–452 (EVERDLKNSE…ENPAGLKSQG (135 aa)). Phosphoserine occurs at positions 347 and 354. Residues 352 to 368 (GKSGRKHEDGGGDKKPA) are compositionally biased toward basic and acidic residues. Positions 369–379 (EPAGAARAAQP) are enriched in low complexity. Phosphoserine is present on Ser-423. Positions 428–441 (AGGGATGHPGGGQG) are enriched in gly residues. TPR repeat units follow at residues 445-478 (PAGL…LEPA), 487-520 (SILY…HPFS), 522-554 (KPLL…DCGL), 623-656 (FKAL…NNKE), 657-690 (CAIY…ADGN), and 692-724 (KAFY…DPSI). 2 stretches are compositionally biased toward basic and acidic residues: residues 758–769 (IQEVNEGKEEPG) and 784–799 (KGGK…EKLP). The tract at residues 758-801 (IQEVNEGKEEPGRPAGEVSMGCLASEKGGKSSRSPEDPEKLPIA) is disordered. Position 781 to 788 (781 to 788 (ASEKGGKS)) interacts with GTP. Phosphoserine is present on Ser-791.

In terms of tissue distribution, present in most tissues, including lung, with the strongest expression in brain, colon, kidney, and testis. In sperm and testis, detected in particular in pachytene primary spermatocytes. Up-regulated in pancreatic tumor tissues and not in normal pancreatic tissue.

Its subcellular location is the cytoplasm. The protein localises to the dynein axonemal particle. Functionally, may play a role in the cytoplasmic assembly of the ciliary dynein arms. May play a role in fertilization. Binds GTP and has GTPase activity. The sequence is that of Sperm-associated antigen 1 (SPAG1) from Homo sapiens (Human).